The primary structure comprises 225 residues: Protein-L-isoaspartate O-methyltransferase (225 aa).

Residues 57–60 (ATVS), histidine 65, serine 89, 110–111 (EH), 142–143 (DG), threonine 216, and glutamine 221 each bind S-adenosyl-L-homocysteine. Residue serine 60 is part of the active site.

This sequence belongs to the methyltransferase superfamily. L-isoaspartyl/D-aspartyl protein methyltransferase family. Monomer.

It localises to the cytoplasm. The protein localises to the cytosol. It carries out the reaction [protein]-L-isoaspartate + S-adenosyl-L-methionine = [protein]-L-isoaspartate alpha-methyl ester + S-adenosyl-L-homocysteine. Its function is as follows. Initiates the repair of damaged proteins by catalyzing methyl esterification of L-isoaspartyl and D-aspartyl residues produced by spontaneous isomerization and racemization of L-aspartyl and L-asparaginyl residues in aging peptides and proteins. The sequence is that of Protein-L-isoaspartate O-methyltransferase (pcm-1) from Caenorhabditis elegans.